Reading from the N-terminus, the 465-residue chain is Cysteine--tRNA ligase (465 aa).

Position 30 (C30) interacts with Zn(2+). The 'HIGH' region signature appears at 32 to 42 (MTVYDYCHVGH). Residues C214, H239, and E243 each contribute to the Zn(2+) site. A 'KMSKS' region motif is present at residues 271–275 (KMSKS). K274 provides a ligand contact to ATP.

Belongs to the class-I aminoacyl-tRNA synthetase family. As to quaternary structure, monomer. Zn(2+) is required as a cofactor.

The protein localises to the cytoplasm. The catalysed reaction is tRNA(Cys) + L-cysteine + ATP = L-cysteinyl-tRNA(Cys) + AMP + diphosphate. The sequence is that of Cysteine--tRNA ligase from Paraburkholderia xenovorans (strain LB400).